The primary structure comprises 475 residues: MNTALAQQIANEGGVEAWMIAQQHKSLLRFLTCGSVDDGKSTLIGRLLHDTRQIYEDQLSSLHNDSKRHGTQGEKLDLALLVDGLQAEREQGITIDVAYRYFSTEKRKFIIADTPGHEQYTRNMATGASTCELAILLIDARKGVLDQTRRHSFISTLLGIKHLVVAINKMDLVDYSEETFTRIREDYLTFAGQLPGNLDIRFVPLSALEGDNVASQSESMPWYSGPTLLEVLETVEIQRVVDAQPMRFPVQYVNRPNLDFRGYAGTLASGRVEVGQRVKVLPSGVESNVARIVTFDGDREEAFAGEAITLVLTDEIDISRGDLLLAADEALPAVQSASVDVVWMAEQPLSPGQSYDIKIAGKKTRARVDGIHYQVDINNLTQREVENLPLNGIGLVDLTFDEPLVLDRYQQNPVTGGLIFIDRLSNVTVGAGMVHEPVSQATAAPSEFSAFELELNALVRRHFPHWGARDLLGDK.

Residues 25–239 enclose the tr-type G domain; that stretch reads KSLLRFLTCG…EVLETVEIQR (215 aa). The interval 34–41 is G1; the sequence is GSVDDGKS. 34–41 serves as a coordination point for GTP; it reads GSVDDGKS. Residues 92–96 form a G2 region; the sequence is GITID. The G3 stretch occupies residues 113 to 116; that stretch reads DTPG. GTP-binding positions include 113–117 and 168–171; these read DTPGH and NKMD. Residues 168-171 form a G4 region; that stretch reads NKMD. Residues 206–208 form a G5 region; that stretch reads SAL.

Belongs to the TRAFAC class translation factor GTPase superfamily. Classic translation factor GTPase family. CysN/NodQ subfamily. As to quaternary structure, heterodimer composed of CysD, the smaller subunit, and CysN.

The enzyme catalyses sulfate + ATP + H(+) = adenosine 5'-phosphosulfate + diphosphate. The protein operates within sulfur metabolism; hydrogen sulfide biosynthesis; sulfite from sulfate: step 1/3. In terms of biological role, with CysD forms the ATP sulfurylase (ATPS) that catalyzes the adenylation of sulfate producing adenosine 5'-phosphosulfate (APS) and diphosphate, the first enzymatic step in sulfur assimilation pathway. APS synthesis involves the formation of a high-energy phosphoric-sulfuric acid anhydride bond driven by GTP hydrolysis by CysN coupled to ATP hydrolysis by CysD. In Escherichia coli (strain UTI89 / UPEC), this protein is Sulfate adenylyltransferase subunit 1.